A 129-amino-acid polypeptide reads, in one-letter code: DNA-directed RNA polymerase subunit omega (129 aa).

The interval 77–98 is disordered; sequence VDEPESEVVPALSSAPQNPEAI.

The protein belongs to the RNA polymerase subunit omega family. The RNAP catalytic core consists of 2 alpha, 1 beta, 1 beta' and 1 omega subunit. When a sigma factor is associated with the core the holoenzyme is formed, which can initiate transcription.

The catalysed reaction is RNA(n) + a ribonucleoside 5'-triphosphate = RNA(n+1) + diphosphate. Its function is as follows. Promotes RNA polymerase assembly. Latches the N- and C-terminal regions of the beta' subunit thereby facilitating its interaction with the beta and alpha subunits. This is DNA-directed RNA polymerase subunit omega from Methylocella silvestris (strain DSM 15510 / CIP 108128 / LMG 27833 / NCIMB 13906 / BL2).